A 618-amino-acid chain; its full sequence is Proline--tRNA ligase (618 aa).

Belongs to the class-II aminoacyl-tRNA synthetase family. ProS type 1 subfamily. In terms of assembly, homodimer.

Its subcellular location is the cytoplasm. The catalysed reaction is tRNA(Pro) + L-proline + ATP = L-prolyl-tRNA(Pro) + AMP + diphosphate. In terms of biological role, catalyzes the attachment of proline to tRNA(Pro) in a two-step reaction: proline is first activated by ATP to form Pro-AMP and then transferred to the acceptor end of tRNA(Pro). As ProRS can inadvertently accommodate and process non-cognate amino acids such as alanine and cysteine, to avoid such errors it has two additional distinct editing activities against alanine. One activity is designated as 'pretransfer' editing and involves the tRNA(Pro)-independent hydrolysis of activated Ala-AMP. The other activity is designated 'posttransfer' editing and involves deacylation of mischarged Ala-tRNA(Pro). The misacylated Cys-tRNA(Pro) is not edited by ProRS. The polypeptide is Proline--tRNA ligase (Streptococcus pyogenes serotype M18 (strain MGAS8232)).